We begin with the raw amino-acid sequence, 563 residues long: GTPase Obg (563 aa).

Residues Ser-2–Ile-168 enclose the Obg domain. The 181-residue stretch at Ala-169–His-349 folds into the OBG-type G domain. Residues Gly-175–Ser-182, Phe-200–Val-204, Asp-221–Gly-224, Asn-301–Asp-304, and Ser-330–Ala-332 each bind GTP. Mg(2+)-binding residues include Ser-182 and Thr-202. Positions Asp-383–Pro-469 constitute an OCT domain. A disordered region spans residues Arg-529–Glu-563.

It belongs to the TRAFAC class OBG-HflX-like GTPase superfamily. OBG GTPase family. As to quaternary structure, monomer. The cofactor is Mg(2+).

The protein resides in the cytoplasm. Functionally, an essential GTPase which binds GTP, GDP and possibly (p)ppGpp with moderate affinity, with high nucleotide exchange rates and a fairly low GTP hydrolysis rate. Plays a role in control of the cell cycle, stress response, ribosome biogenesis and in those bacteria that undergo differentiation, in morphogenesis control. The chain is GTPase Obg from Bifidobacterium longum (strain DJO10A).